The chain runs to 131 residues: Mesogenin-1 (131 aa).

Residues 22 to 79 form a disordered region; sequence EDRSFGDSASSPESESFDSACSSPDARSSPTAGCEHAEQQKPKVKMSMRRRMKASERE. Positions 27 to 45 are enriched in low complexity; that stretch reads GDSASSPESESFDSACSSP. Residues 63 to 73 are compositionally biased toward basic residues; the sequence is PKVKMSMRRRM. In terms of domain architecture, bHLH spans 70-124; the sequence is RRRMKASEREKLRMRSLAEALHQLRDYLPPGYSRRGQPLTKIQTLKYTIQYIKEL.

In terms of tissue distribution, coexpression of ntl and spt is required for expression.

The protein localises to the nucleus. Its function is as follows. Involved in specifying the paraxial, but not dorsal, mesoderm. May regulate the expression of T-box transcription factors required for mesoderm formation and differentiation. In Danio rerio (Zebrafish), this protein is Mesogenin-1 (msgn1).